A 61-amino-acid chain; its full sequence is Small ribosomal subunit protein uS14 (61 aa).

Zn(2+)-binding residues include Cys24, Cys27, Cys40, and Cys43.

This sequence belongs to the universal ribosomal protein uS14 family. Zinc-binding uS14 subfamily. In terms of assembly, part of the 30S ribosomal subunit. Contacts proteins S3 and S10. It depends on Zn(2+) as a cofactor.

Functionally, binds 16S rRNA, required for the assembly of 30S particles and may also be responsible for determining the conformation of the 16S rRNA at the A site. The polypeptide is Small ribosomal subunit protein uS14 (Anaeromyxobacter sp. (strain Fw109-5)).